The primary structure comprises 324 residues: Olfactory receptor 2T2 (324 aa).

Residues 1–26 (MGMEGLLQNSTNFVLTGLITHPAFPG) are Extracellular-facing. N-linked (GlcNAc...) asparagine glycosylation occurs at Asn-9. The helical transmembrane segment at 27–50 (LLFAIVFSIFVVAITANLVMILLI) threads the bilayer. Residues 51 to 58 (HMDSRLHT) lie on the Cytoplasmic side of the membrane. A helical membrane pass occupies residues 59-80 (PMYFLLSQLSIMDTIYICITVP). Topologically, residues 81 to 101 (KMLQDLLSKDKTISFLGCAVQ) are extracellular. The cysteines at positions 98 and 190 are disulfide-linked. A helical membrane pass occupies residues 102–121 (IFLYLTLIGGEFFLLGLMAY). Topologically, residues 122 to 140 (DRYVAVCNPLRYPLLMNRR) are cytoplasmic. A helical membrane pass occupies residues 141 to 159 (VCLFMVVGSWVGGSLDGFM). The Extracellular portion of the chain corresponds to 160-196 (LTPVTMSFPFCRSREINHFFCEIPAVLKLSCTDTSLY). A helical membrane pass occupies residues 197 to 220 (ETLMYACCVLMLLIPLSVISVSYT). Topologically, residues 221 to 237 (HILLTVHRMNSAEGRRK) are cytoplasmic. The chain crosses the membrane as a helical span at residues 238-260 (AFATCSSHIMVVSVFYGAAFYTN). Residues 261 to 273 (VLPHSYHTPEKDK) lie on the Extracellular side of the membrane. A helical transmembrane segment spans residues 274 to 293 (VVSAFYTILTPMLNPLIYSL). Topologically, residues 294–324 (RNKDVAAALRKVLGRCGSSQSIRVATVIRKG) are cytoplasmic.

This sequence belongs to the G-protein coupled receptor 1 family.

It is found in the cell membrane. In terms of biological role, odorant receptor. In Homo sapiens (Human), this protein is Olfactory receptor 2T2 (OR2T2).